Consider the following 745-residue polypeptide: MEVMNLIEQPIKVTEWQQTYTYDSGIHSGVNTCVPSVSSKGLLDEDDTCGRQYTLKKTTTYTQGVPQSQGDLEYQMSTTARAKRVREAMCPGVSGEDSSLLLATQVEGQTTNLQRLAEPSQLLKSAIVHLINYQDDAELATRALPELTKLLNDEDPVVVTKAAMIVNQLSKKEASRRALMGSPQLVAAVVRTMQNTSDLDTARCTTSILHNLSHHREGLLAIFKSGGIPALVRMLSSPVESVLFYAITTLHNLLLYQEGAKMAVRLADGLQKMVPLLNKNNPKFLAITTDCLQLLAYGNQESKLIILANGGPQGLVQIMRNYSYEKLLWTTSRVLKVLSVCPSNKPAIVEAGGMQALGKHLTSNSPRLVQNCLWTLRNLSDVATKQEGLENVLKILVNQLSVDDVNVLTCATGTLSNLTCNNSKNKTLVTQNSGVEALIHAILRAGDKDDITEPAVCALRHLTSRHPEAEMAQNSVRLNYGIPAIVKLLNQPNQWPLVKATIGLIRNLALCPANHAPLQEAAVIPRLVQLLVKAHQDAQRHVAAGTQQPYTDGVRMEEIVEGCTGALHILARDPMNRMEIFRLNTIPLFVQLLYSSVENIQRVAAGVLCELAQDKEAADAIDAEGASAPLMELLHSRNEGTATYAAAVLFRISEDKNPDYRKRVSVELTNSLFKHDPAAWEAAQSMIPINEPYADDMDATYRPMYSSDVPLDPLDMHMDMDGDYPMDTYSDGLRPPYPAADHMLA.

At M1 the chain carries N-acetylmethionine. O-linked (GlcNAc) threonine glycosylation is present at T14. Phosphoserine is present on residues S99 and S125. ARM repeat units lie at residues 132 to 171, 172 to 215, 216 to 255, 258 to 297, 298 to 341, 342 to 381, 383 to 420, 423 to 464, 470 to 510, 512 to 551, 574 to 613, and 615 to 661; these read NYQD…QLSK, KEAS…LSHH, REGL…NLLL, EGAK…LLAY, GNQE…LSVC, PSNK…NLSD, ATKQ…NLTC, SKNK…HLTS, EMAQ…NLAL, PANH…QPYT, PMNR…ELAQ, and KEAA…PDYR. The interval 132–297 is interaction with DSC1 and DSG1; it reads NYQDDAELAT…TTDCLQLLAY (166 aa). S182 carries the phosphoserine modification. An interaction with DSC1 region spans residues 574-661; it reads PMNRMEIFRL…ISEDKNPDYR (88 aa). Phosphoserine is present on residues S665 and S730.

It belongs to the beta-catenin family. Homodimer. Component of an E-cadherin/catenin adhesion complex composed of at least E-cadherin/CDH1 and gamma-catenin/JUP, and possibly alpha-catenin/CTNNA1; the complex is located to adherens junctions. The stable association of CTNNA1 is controversial as CTNNA1 was shown not to bind to F-actin when assembled in the complex. Interacts with MUC1. Interacts with CAV1. Interacts with PTPRJ. Interacts with DSG1. Interacts with DSC1 and DSC2. Interacts with PKP2. Interacts with PKP3 (via N-terminus); the interaction is required for PKP3 localization to desmosome cell-cell junctions. Interacts with DSG4. In terms of processing, may be phosphorylated by FER. Expressed in the heart (at protein level).

Its subcellular location is the cell junction. It localises to the adherens junction. The protein localises to the desmosome. It is found in the cytoplasm. The protein resides in the cytoskeleton. Its subcellular location is the cell membrane. It localises to the nucleus. Common junctional plaque protein. The membrane-associated plaques are architectural elements in an important strategic position to influence the arrangement and function of both the cytoskeleton and the cells within the tissue. The presence of plakoglobin in both the desmosomes and in the intermediate junctions suggests that it plays a central role in the structure and function of submembranous plaques. Acts as a substrate for VE-PTP and is required by it to stimulate VE-cadherin function in endothelial cells. Can replace beta-catenin in E-cadherin/catenin adhesion complexes which are proposed to couple cadherins to the actin cytoskeleton. The polypeptide is Junction plakoglobin (Rattus norvegicus (Rat)).